We begin with the raw amino-acid sequence, 244 residues long: 5-oxoprolinase subunit A (244 aa).

Belongs to the LamB/PxpA family. Forms a complex composed of PxpA, PxpB and PxpC.

It carries out the reaction 5-oxo-L-proline + ATP + 2 H2O = L-glutamate + ADP + phosphate + H(+). Functionally, catalyzes the cleavage of 5-oxoproline to form L-glutamate coupled to the hydrolysis of ATP to ADP and inorganic phosphate. The protein is 5-oxoprolinase subunit A of Shigella boydii serotype 18 (strain CDC 3083-94 / BS512).